Consider the following 643-residue polypeptide: Phosphomethylpyrimidine synthase (643 aa).

Residues N248, M277, Y306, H342, 362-364 (SRG), 403-406 (DGLR), and E442 each bind substrate. H446 contributes to the Zn(2+) binding site. Y469 serves as a coordination point for substrate. Residue H510 participates in Zn(2+) binding. [4Fe-4S] cluster contacts are provided by C590, C593, and C598.

It belongs to the ThiC family. In terms of assembly, homodimer. [4Fe-4S] cluster is required as a cofactor.

The catalysed reaction is 5-amino-1-(5-phospho-beta-D-ribosyl)imidazole + S-adenosyl-L-methionine = 4-amino-2-methyl-5-(phosphooxymethyl)pyrimidine + CO + 5'-deoxyadenosine + formate + L-methionine + 3 H(+). Its pathway is cofactor biosynthesis; thiamine diphosphate biosynthesis. In terms of biological role, catalyzes the synthesis of the hydroxymethylpyrimidine phosphate (HMP-P) moiety of thiamine from aminoimidazole ribotide (AIR) in a radical S-adenosyl-L-methionine (SAM)-dependent reaction. The chain is Phosphomethylpyrimidine synthase from Burkholderia cenocepacia (strain HI2424).